Here is a 489-residue protein sequence, read N- to C-terminus: MAVFAIQRLYIGGAYVDATSGETFDTLDPATGETLASVQQASAADVERAVQSAREGQREWAALTAMQRSRVLRRAVEILRERNDELAALETRDTGKPIAETLAVDIATGADVIEYYAGLATAIEGQQIPLRPTSFVYTRREPLGVCAGIGAWNYPIQIACWKSAPALAAGNAMIFKPSEITPLSALKLAEIYTEAGVPAGVFNVVQGDGRVGAMLAAHPDIEKISFTGGVETGKKVMSLAGASSLKEVTMELGGKSPLLVFDDADLERAADIAMSANFFSSGQVCTNGTRVFVQRGVLERFEALVLERVKRIRVGAPTNAATNFGPLASAAQLQKVLGYIESGKQEGARLMAGGKRLTEGHFGNGQYVEPTVFTGCHDDMRIVREEIFGPVMSILVFDDEDEAIARANRTAYGLAAGVVTGNLARAHRVIHRLEAGICWINTWGESPAEMPVGGYKQSGVGRENGLTTLEHYTRIKSVQVELGPYQPVF.

Residues T26 and D93 each coordinate K(+). 150-152 (GAW) serves as a coordination point for NAD(+). Catalysis depends on K162, which acts as the Charge relay system. 176 to 179 (KPSE) lines the NAD(+) pocket. I180 contacts K(+). An NAD(+)-binding site is contributed by 229 to 232 (GVET). L245 provides a ligand contact to K(+). E251 serves as the catalytic Proton acceptor. The NAD(+) site is built by G253, C285, and E386. C285 acts as the Nucleophile in catalysis. Position 285 is a cysteine sulfenic acid (-SOH) (C285). K(+) contacts are provided by K456 and G459. E463 serves as the catalytic Charge relay system.

It belongs to the aldehyde dehydrogenase family. As to quaternary structure, dimer of dimers. The cofactor is K(+).

It catalyses the reaction betaine aldehyde + NAD(+) + H2O = glycine betaine + NADH + 2 H(+). Its pathway is amine and polyamine biosynthesis; betaine biosynthesis via choline pathway; betaine from betaine aldehyde: step 1/1. Functionally, involved in the biosynthesis of the osmoprotectant glycine betaine. Catalyzes the irreversible oxidation of betaine aldehyde to the corresponding acid. The polypeptide is Betaine aldehyde dehydrogenase (Paraburkholderia xenovorans (strain LB400)).